A 145-amino-acid polypeptide reads, in one-letter code: Basic phospholipase A2 beta-bungarotoxin A-AL1 chain (145 aa).

The first 17 residues, 1–17 (MLIFLWCGAVCVSLLGA), serve as a signal peptide directing secretion. The propeptide occupies 18 to 25 (ANIPPHPL). Intrachain disulfides connect Cys52/Cys144, Cys54/Cys70, Cys76/Cys118, Cys86/Cys111, and Cys104/Cys116. 3 residues coordinate Ca(2+): Tyr53, Gly55, and Gly57. His73 is a catalytic residue. The active site involves Asp119.

It belongs to the phospholipase A2 family. Group I subfamily. G49 sub-subfamily. As to quaternary structure, heterodimer; disulfide-linked. The A chains have phospholipase A2 activity and the B chains show homology with the basic protease inhibitors. Ca(2+) is required as a cofactor. In terms of processing, this enzyme lacks one of the seven disulfide bonds found in similar PLA2 proteins. In terms of tissue distribution, expressed by the venom gland.

Its subcellular location is the secreted. It catalyses the reaction a 1,2-diacyl-sn-glycero-3-phosphocholine + H2O = a 1-acyl-sn-glycero-3-phosphocholine + a fatty acid + H(+). Snake venom phospholipase A2 (PLA2) that inhibits neuromuscular transmission by blocking acetylcholine release from the nerve termini. PLA2 catalyzes the calcium-dependent hydrolysis of the 2-acyl groups in 3-sn-phosphoglycerides. The protein is Basic phospholipase A2 beta-bungarotoxin A-AL1 chain of Bungarus multicinctus (Many-banded krait).